The sequence spans 503 residues: Probable cytosol aminopeptidase (503 aa).

Lys274 and Asp279 together coordinate Mn(2+). Residue Lys286 is part of the active site. Residues Asp297, Asp356, and Glu358 each contribute to the Mn(2+) site. Arg360 is an active-site residue.

Belongs to the peptidase M17 family. Mn(2+) serves as cofactor.

The protein localises to the cytoplasm. The catalysed reaction is Release of an N-terminal amino acid, Xaa-|-Yaa-, in which Xaa is preferably Leu, but may be other amino acids including Pro although not Arg or Lys, and Yaa may be Pro. Amino acid amides and methyl esters are also readily hydrolyzed, but rates on arylamides are exceedingly low.. It catalyses the reaction Release of an N-terminal amino acid, preferentially leucine, but not glutamic or aspartic acids.. Presumably involved in the processing and regular turnover of intracellular proteins. Catalyzes the removal of unsubstituted N-terminal amino acids from various peptides. This chain is Probable cytosol aminopeptidase, found in Burkholderia ambifaria (strain MC40-6).